We begin with the raw amino-acid sequence, 130 residues long: MAKAKYYGTGRRKSSIARVYLVPGTGKVTINKRDMDAYFGLETLKLIARQPLVLTETADKFDVLVNVHGGGFTGQAGAIRHGISRALLQADADYRPALKKAGFLTRDPRMKERKKYGLKAARRAPQFSKR.

The disordered stretch occupies residues 109–130 (RMKERKKYGLKAARRAPQFSKR). Over residues 111-130 (KERKKYGLKAARRAPQFSKR) the composition is skewed to basic residues.

It belongs to the universal ribosomal protein uS9 family.

This is Small ribosomal subunit protein uS9 from Lachnoclostridium phytofermentans (strain ATCC 700394 / DSM 18823 / ISDg) (Clostridium phytofermentans).